The following is a 38-amino-acid chain: NWSWCSGSGEGCDYHSECCGERCCIESMCIGDGVACWP.

4 disulfide bridges follow: Cys-5-Cys-19, Cys-12-Cys-24, Cys-18-Cys-29, and Cys-23-Cys-36.

The protein belongs to the conotoxin I1 superfamily. As to expression, expressed by the venom duct.

It localises to the secreted. Functionally, iota-conotoxins bind to voltage-gated sodium channels (Nav) and act as agonists by shifting the voltage-dependence of activation to more hyperpolarized levels. Produces general excitatory symptoms. In Conus lynceus (Lynceus cone), this protein is Iota-conotoxin-like L11.5.